A 97-amino-acid chain; its full sequence is Mapk-regulated corepressor-interacting protein 1 (97 aa).

Polar residues predominate over residues 1–26 (MTSSSTPRMHTYKRTSSPRSPTNTGE). 2 disordered regions span residues 1 to 27 (MTSS…TGEL) and 54 to 97 (QNHE…SKKS). Basic and acidic residues-rich tracts occupy residues 54–68 (QNHE…EYVE) and 84–97 (SDLK…SKKS). A PXDLS motif motif is present at residues 80-84 (PVDLS).

Belongs to the MCRIP family.

It localises to the nucleus. Its subcellular location is the cytoplasm. It is found in the stress granule. Its function is as follows. May play a role in the regulation of the epithelial-mesenchymal transition. This chain is Mapk-regulated corepressor-interacting protein 1 (mcrip1), found in Danio rerio (Zebrafish).